The following is a 634-amino-acid chain: Putative peptidoglycan O-acetyltransferase YrhL (634 aa).

11 helical membrane passes run 10-30 (YIPGLDGLRAFAVLSVITYHL), 38-58 (GFIGVDIFFVLSGYLITSILL), 79-99 (RLLPAAYLMIFSTVVWVVLFD), 110-130 (AISSLFYMSNWWFIFHKLSYF), 145-165 (LAIEEQFYIIWPMFLVVGMYI), 172-192 (LAAVISLLVLCSAVMMSVLYE), 244-264 (FLAFCILVLCVYFTDEYEPFL), 270-290 (LFISVTAAILIACVCHPSSFL), 307-327 (YGIYLWHYPVIVLSTPVQEIG), 329-349 (PVFWHIVLKVIVTCILAELSY), and 385-405 (MSIGFIIFAILIFAGGLSGLA). The interval 413–481 (KWTYSSQETN…SQQLKKPADT (69 aa)) is disordered. Residues 414-429 (WTYSSQETNADTSQAS) are compositionally biased toward polar residues. Basic and acidic residues-rich tracts occupy residues 430–447 (GDKKNAAADKKHNPEQKT) and 455–470 (KENKDSGQETHKKKDT).

Belongs to the acyltransferase 3 family.

The protein resides in the cell membrane. The protein is Putative peptidoglycan O-acetyltransferase YrhL (yrhL) of Bacillus subtilis (strain 168).